Here is a 423-residue protein sequence, read N- to C-terminus: TNF receptor-associated factor family protein DDB_G0277243 (423 aa).

The RING-type; degenerate zinc finger occupies 20–66 (CSICVDPVLNSLPLEQHQALSCKNGHLLCQACWGKQLALRKECCICK). 2 consecutive TRAF-type zinc fingers follow at residues 124–179 (SHLR…NDMP) and 180–237 (THIE…CYLS). Residues 287-411 (RYKGNWTIEN…DGKLTINIDV (125 aa)) form the MATH domain.

The protein belongs to the TNF receptor-associated factor family. A subfamily.

It localises to the cytoplasm. In terms of biological role, probable adapter protein and signal transducer that links members of the tumor necrosis factor receptor family to different signaling pathways by association with the receptor cytoplasmic domain and kinases. The chain is TNF receptor-associated factor family protein DDB_G0277243 from Dictyostelium discoideum (Social amoeba).